Consider the following 43-residue polypeptide: Oxygen-evolving enhancer protein 2 (43 aa).

It belongs to the PsbP family.

Its subcellular location is the plastid. The protein localises to the chloroplast thylakoid membrane. May be involved in the regulation of photosystem II. The chain is Oxygen-evolving enhancer protein 2 from Physcomitrium patens (Spreading-leaved earth moss).